We begin with the raw amino-acid sequence, 921 residues long: 2-oxoadipate dehydrogenase complex component E1 (921 aa).

Lys184 and Lys189 each carry N6-succinyllysine. Residues Gly300 to Ser319 are disordered. 2 positions are modified to N6-succinyllysine: Lys801 and Lys819.

The protein belongs to the alpha-ketoglutarate dehydrogenase family. In terms of assembly, the 2-oxoadipate dehydrogenase complex is composed of OADH (2-oxoadipate dehydrogenase; E1a), DLST (dihydrolipoamide succinyltransferase; E2) and DLD (dihydrolipoamide dehydrogenase; E3). E1a functional unit is a dimer. The cofactor is thiamine diphosphate.

The protein localises to the mitochondrion. The enzyme catalyses N(6)-[(R)-lipoyl]-L-lysyl-[protein] + 2-oxoadipate + H(+) = N(6)-[(R)-S(8)-glutaryldihydrolipoyl]-L-lysyl-[protein] + CO2. Its pathway is amino-acid degradation. In terms of biological role, 2-oxoadipate dehydrogenase (E1a) component of the 2-oxoadipate dehydrogenase complex (OADHC). Participates in the first step, rate limiting for the overall conversion of 2-oxoadipate (alpha-ketoadipate) to glutaryl-CoA and CO(2) catalyzed by the whole OADHC. Catalyzes the irreversible decarboxylation of 2-oxoadipate via the thiamine diphosphate (ThDP) cofactor and subsequent transfer of the decarboxylated acyl intermediate on an oxidized dihydrolipoyl group that is covalently amidated to the E2 enzyme (dihydrolipoyllysine-residue succinyltransferase or DLST). Can catalyze the decarboxylation of 2-oxoglutarate in vitro, but at a much lower rate than 2-oxoadipate. Responsible for the last step of L-lysine, L-hydroxylysine and L-tryptophan catabolism with the common product being 2-oxoadipate. This is 2-oxoadipate dehydrogenase complex component E1 (Dhtkd1) from Mus musculus (Mouse).